The primary structure comprises 930 residues: Serine/threonine-protein kinase PknD (930 aa).

The region spanning 4–291 (YDIIRMIGKG…ALKADIEQHL (288 aa)) is the Protein kinase domain. Residues 10–18 (IGKGGMGEV) and Lys33 contribute to the ATP site. The Proton acceptor role is filled by Asp138.

This sequence belongs to the protein kinase superfamily. Ser/Thr protein kinase family. In terms of processing, autophosphorylated on serine and threonine residues.

The enzyme catalyses L-seryl-[protein] + ATP = O-phospho-L-seryl-[protein] + ADP + H(+). The catalysed reaction is L-threonyl-[protein] + ATP = O-phospho-L-threonyl-[protein] + ADP + H(+). In terms of biological role, together with the serine/threonine kinase Pkn1, may play a role in the specific interactions with host proteins during intracellular growth. The chain is Serine/threonine-protein kinase PknD from Chlamydia caviae (strain ATCC VR-813 / DSM 19441 / 03DC25 / GPIC) (Chlamydophila caviae).